We begin with the raw amino-acid sequence, 316 residues long: protein SLOW GREEN 1, chloroplastic (316 aa).

The transit peptide at 1–39 directs the protein to the chloroplast; sequence MISSLSASSSLVSSFVAVKATPVTGPLIPRRDLLSIRIR. 4 TPR repeats span residues 118-151, 152-185, 226-259, and 261-293; these read VETLRSLLQQKLEKGEDEEALKLLERLVAAQPEE, TEWKFLMARLLGEMGRPENARQMFEEILQRNPLS, RDVRLIIAQIHFLQKNVDEALKSYEQLTKEDPKD, and RPYFCRGMIYSLLDKNVEAKEQFAKYRELSPKK.

Ubiquitous. Preferentially expressed in newly formed green tissues.

It localises to the plastid. The protein localises to the chloroplast. Required for the early stage of chloroplast development. May be involved in chloroplast protein biosynthesis and/or degradation. This is protein SLOW GREEN 1, chloroplastic from Arabidopsis thaliana (Mouse-ear cress).